The following is a 494-amino-acid chain: Alpha-amylase-related protein (494 aa).

The N-terminal stretch at 1–20 (MIKFALALTLCLAGASLSLA) is a signal peptide. Position 21 is a pyrrolidone carboxylic acid (Q21). The cysteines at positions 48 and 104 are disulfide-linked. Ca(2+) contacts are provided by N118, Q169, and D178. A disulfide bridge connects residues C157 and C171. R206 provides a ligand contact to chloride. Catalysis depends on D208, which acts as the Nucleophile. H212 lines the Ca(2+) pocket. E245 functions as the Proton donor in the catalytic mechanism. Chloride is bound by residues N308 and R343. 3 disulfide bridges follow: C376–C382, C418–C441, and C448–C460.

It belongs to the glycosyl hydrolase 13 family. As to quaternary structure, monomer. The cofactor is Ca(2+). Chloride serves as cofactor.

It is found in the secreted. It catalyses the reaction Endohydrolysis of (1-&gt;4)-alpha-D-glucosidic linkages in polysaccharides containing three or more (1-&gt;4)-alpha-linked D-glucose units.. The protein is Alpha-amylase-related protein (Amyrel) of Drosophila jambulina (Fruit fly).